Here is an 86-residue protein sequence, read N- to C-terminus: UPF0297 protein SAHV_1604 (86 aa).

This sequence belongs to the UPF0297 family.

The sequence is that of UPF0297 protein SAHV_1604 from Staphylococcus aureus (strain Mu3 / ATCC 700698).